The primary structure comprises 158 residues: NAD(P)H-quinone oxidoreductase subunit J, chloroplastic (158 aa).

The protein belongs to the complex I 30 kDa subunit family. As to quaternary structure, NDH is composed of at least 16 different subunits, 5 of which are encoded in the nucleus.

The protein resides in the plastid. It is found in the chloroplast thylakoid membrane. It catalyses the reaction a plastoquinone + NADH + (n+1) H(+)(in) = a plastoquinol + NAD(+) + n H(+)(out). The catalysed reaction is a plastoquinone + NADPH + (n+1) H(+)(in) = a plastoquinol + NADP(+) + n H(+)(out). In terms of biological role, NDH shuttles electrons from NAD(P)H:plastoquinone, via FMN and iron-sulfur (Fe-S) centers, to quinones in the photosynthetic chain and possibly in a chloroplast respiratory chain. The immediate electron acceptor for the enzyme in this species is believed to be plastoquinone. Couples the redox reaction to proton translocation, and thus conserves the redox energy in a proton gradient. In Coffea arabica (Arabian coffee), this protein is NAD(P)H-quinone oxidoreductase subunit J, chloroplastic.